A 560-amino-acid chain; its full sequence is DNA ligase B (560 aa).

Lysine 124 (N6-AMP-lysine intermediate) is an active-site residue.

Belongs to the NAD-dependent DNA ligase family. LigB subfamily.

It catalyses the reaction NAD(+) + (deoxyribonucleotide)n-3'-hydroxyl + 5'-phospho-(deoxyribonucleotide)m = (deoxyribonucleotide)n+m + AMP + beta-nicotinamide D-nucleotide.. Functionally, catalyzes the formation of phosphodiester linkages between 5'-phosphoryl and 3'-hydroxyl groups in double-stranded DNA using NAD as a coenzyme and as the energy source for the reaction. The sequence is that of DNA ligase B from Escherichia coli O81 (strain ED1a).